The primary structure comprises 111 residues: Nucleoid-associated protein NGK_1136 (111 aa).

Belongs to the YbaB/EbfC family. As to quaternary structure, homodimer.

Its subcellular location is the cytoplasm. The protein localises to the nucleoid. Functionally, binds to DNA and alters its conformation. May be involved in regulation of gene expression, nucleoid organization and DNA protection. The sequence is that of Nucleoid-associated protein NGK_1136 from Neisseria gonorrhoeae (strain NCCP11945).